A 693-amino-acid chain; its full sequence is Putative transmembrane protein ORF68 (693 aa).

Positions 1-17 (MILTIILYTLLFSTCSA) are cleaved as a signal peptide. At 18-666 (QSVHTMPEAV…WLTKFGTGGG (649 aa)) the chain is on the extracellular side. A coiled-coil region spans residues 208-256 (SKAANNRMDALEDGMKNINTRVTETNLLLEKLSTEVTGALTQLENEIKM). A helical transmembrane segment spans residues 667 to 687 (IAGVTIGLLLPILAIVFSCYV). At 688-693 (FCKRRV) the chain is on the cytoplasmic side.

The protein localises to the host membrane. The polypeptide is Putative transmembrane protein ORF68 (Magallana gigas (Pacific oyster)).